Here is a 213-residue protein sequence, read N- to C-terminus: Octanoyltransferase (213 aa).

Positions 32-207 (ENTPDEIWLV…NILALLNNPP (176 aa)) constitute a BPL/LPL catalytic domain. Residues 71-78 (RGGQVTYH), 138-140 (SLG), and 151-153 (GLA) each bind substrate. The Acyl-thioester intermediate role is filled by Cys169.

It belongs to the LipB family.

The protein localises to the cytoplasm. The enzyme catalyses octanoyl-[ACP] + L-lysyl-[protein] = N(6)-octanoyl-L-lysyl-[protein] + holo-[ACP] + H(+). Its pathway is protein modification; protein lipoylation via endogenous pathway; protein N(6)-(lipoyl)lysine from octanoyl-[acyl-carrier-protein]: step 1/2. Functionally, catalyzes the transfer of endogenously produced octanoic acid from octanoyl-acyl-carrier-protein onto the lipoyl domains of lipoate-dependent enzymes. Lipoyl-ACP can also act as a substrate although octanoyl-ACP is likely to be the physiological substrate. The sequence is that of Octanoyltransferase from Citrobacter koseri (strain ATCC BAA-895 / CDC 4225-83 / SGSC4696).